The chain runs to 229 residues: Protein 33K (229 aa).

The tract at residues 1 to 157 is disordered; sequence MAPKKKLQLP…GALRLAPNEP (157 aa). Residues 14-54 are compositionally biased toward acidic residues; the sequence is TDEEEYWDSQAEEVLDEEEEDMMEDWESLDEEASEVEEVSD. 3 stretches are compositionally biased toward low complexity: residues 55-64, 71-82, and 100-122; these read ETPSPSVAFP, SATGSSMATTSA, and TTGTRAAHTAPAAAAAAATAAAT. The necessary for nuclear subcellular location stretch occupies residues 172-199; that stretch reads YAIFQQSRGQEQELKIKNRSLRSLTRSC. Positions 178-198 are RS-repeat; required for splicing enhancer activity; it reads SRGQEQELKIKNRSLRSLTRS.

This sequence belongs to the adenoviridae splicing factor family. In terms of assembly, homooligomer. Interacts with DBP; this interaction occurs at a unique vertex during genome packaging. Interacts with IVa2; this interaction occurs at a unique vertex during genome packaging and seems to potentiate IVa2 and 33K oligomerization. In terms of processing, phosphorylated in vitro by human PKA and PRKDC. PRKDC inhibits, whereas PKA activates the splicing factor.

The protein resides in the host nucleus. Promotes alternative splicing of late transcripts by promoting splicing at weak 3' splice sites. Required for the temporal activation of major late pre-mRNA splicing at late times of infection. Induces the splicing and expression of the late capsid vertex protein. In terms of biological role, probably functions as the small terminase that is part of the molecular motor that translocates genomic DNA in empty capsid during DNA packaging. This motor is located at a unique vertex and comprises at least the IVa2 ATPase, the small terminase 33K and probably a portal. Forms a ring-like structure of about 17 nm in which genomic DNA is translocated into the capsid. Stimulates IVa2 ATPase activity in the presence of the viral genome. Once the DNA is packaged, the terminase detaches: the 33K protein is present in the empty particles, but not in the mature virions. Also involved in virion assembly. The polypeptide is Protein 33K (Homo sapiens (Human)).